A 500-amino-acid polypeptide reads, in one-letter code: Protein ASPARTIC PROTEASE IN GUARD CELL 1 (500 aa).

A signal peptide spans 1–24; that stretch reads MAFPRFLSLLAVVTLSLFLTTTDA. Positions 162–496 constitute a Peptidase A1 domain; the sequence is YFSRIGVGTP…DLSKNVIGLS (335 aa). Residue aspartate 180 is part of the active site. 6 disulfides stabilise this stretch: cysteine 190–cysteine 193, cysteine 196–cysteine 271, cysteine 217–cysteine 235, cysteine 222–cysteine 230, cysteine 307–cysteine 500, and cysteine 419–cysteine 461. Aspartate 379 is an active-site residue.

The protein belongs to the peptidase A1 family. Expressed in young seedlings, leaves, guard-cells, stems, flowers and siliques, but not in roots or mesophyll cells.

It is found in the endoplasmic reticulum. With respect to regulation, inhibited by pepstatin A. In terms of biological role, aspartic protease involved in drought avoidance through abscisic acid signaling. The chain is Protein ASPARTIC PROTEASE IN GUARD CELL 1 (ASPG1) from Arabidopsis thaliana (Mouse-ear cress).